Consider the following 335-residue polypeptide: Nucleoid-associated protein PP_0973 (335 aa).

Belongs to the YejK family.

It is found in the cytoplasm. The protein localises to the nucleoid. The polypeptide is Nucleoid-associated protein PP_0973 (Pseudomonas putida (strain ATCC 47054 / DSM 6125 / CFBP 8728 / NCIMB 11950 / KT2440)).